The chain runs to 480 residues: MVRVRFAPSPTGPLHIGGARSALFNYLFARKNNGVFIVRIEDTDLERSSRESEKNILESLKWLGITWDEGIEVGGENGPYRQTERLDLYQKYAQKLIEEGFAYYCFCTEEELEEERKNLLAKGEMPRYLGKCRNLTPEQKEKYLAEGRKPTVRFKVPAGRTIVINDLVRGVVSFETDGIGDFIIVKSDGIPTYNFAVVIDDVTMGITHVLRGEEHLSNTPRQILIYEALGFKIPEFAHISLILGKDRTKMSKRHGATSVENYREKGYLPEALVNFLALLGWSPGTEEEIFTMEQLIERFSLDRVAKNPAIFDLDKLNWINGYYIRNSELSRIVELSLPFFQSCGYVSQNPTEEEMRKLTKVVEATREYVVTLSELPEHAAIFYQKELAFEEEAKTLLADEEARNILRKVADKLREIPGSEEEEIKGFLKKLPKELGVGGKKVYMPLRAALTGKTHGPELYQVIAILGPAEAERRIMNLFN.

The 'HIGH' region motif lies at 8–18 (PSPTGPLHIGG). The 'KMSKS' region motif lies at 249–253 (KMSKR). An ATP-binding site is contributed by Lys-252.

The protein belongs to the class-I aminoacyl-tRNA synthetase family. Glutamate--tRNA ligase type 1 subfamily. Monomer.

It localises to the cytoplasm. It catalyses the reaction tRNA(Glu) + L-glutamate + ATP = L-glutamyl-tRNA(Glu) + AMP + diphosphate. Catalyzes the attachment of glutamate to tRNA(Glu) in a two-step reaction: glutamate is first activated by ATP to form Glu-AMP and then transferred to the acceptor end of tRNA(Glu). The sequence is that of Glutamate--tRNA ligase from Carboxydothermus hydrogenoformans (strain ATCC BAA-161 / DSM 6008 / Z-2901).